The following is a 381-amino-acid chain: DNA repair protein RAD51 homolog 3 (381 aa).

Residues 1 to 24 form a disordered region; the sequence is MDEDINKDTNNNNNTTDSNNNNNN. Over residues 8-24 the composition is skewed to low complexity; the sequence is DTNNNNNTTDSNNNNNN. 89–96 serves as a coordination point for ATP; sequence GVPGIGKT. A disordered region spans residues 313 to 381; sequence GFNHPPPLNP…NDENEMYIEN (69 aa). The stretch at 323–377 forms a coiled coil; that stretch reads EDQEQEKEKEKRKKKNNNNNNNNNNNNNNNNNNNNNNNNNNNNNNNNKNNDENEM. Over residues 339-370 the composition is skewed to low complexity; it reads NNNNNNNNNNNNNNNNNNNNNNNNNNNNNNNK.

This sequence belongs to the RecA family. RAD51 subfamily.

It localises to the nucleus. Involved in the homologous recombination repair (HRR) pathway of double-stranded DNA breaks arising during DNA replication or induced by DNA-damaging agents. This chain is DNA repair protein RAD51 homolog 3 (rad51c), found in Dictyostelium discoideum (Social amoeba).